A 304-amino-acid polypeptide reads, in one-letter code: Cell surface-binding protein OPG105 (304 aa).

Residues methionine 1–glycine 235 form the Alpha-carbonic anhydrase domain. At methionine 1–threonine 275 the chain is on the virion surface side. The helical transmembrane segment at phenylalanine 276–methionine 294 threads the bilayer. At serine 295–asparagine 304 the chain is on the intravirion side.

The protein belongs to the alpha-carbonic anhydrase family. Homodimer; disulfide-linked. In terms of processing, apparently non-glycosylated.

The protein localises to the virion membrane. Functionally, binds to chondroitin sulfate on the cell surface to provide virion attachment to target cell. The protein is Cell surface-binding protein OPG105 (OPG105) of Homo sapiens (Human).